Here is a 152-residue protein sequence, read N- to C-terminus: Ribosome maturation factor RimP (152 aa).

Belongs to the RimP family.

It localises to the cytoplasm. Functionally, required for maturation of 30S ribosomal subunits. The chain is Ribosome maturation factor RimP from Teredinibacter turnerae (strain ATCC 39867 / T7901).